Consider the following 501-residue polypeptide: Lysine--tRNA ligase (501 aa).

Mg(2+)-binding residues include glutamate 404 and glutamate 411.

The protein belongs to the class-II aminoacyl-tRNA synthetase family. As to quaternary structure, homodimer. The cofactor is Mg(2+).

It is found in the cytoplasm. The enzyme catalyses tRNA(Lys) + L-lysine + ATP = L-lysyl-tRNA(Lys) + AMP + diphosphate. This is Lysine--tRNA ligase from Campylobacter jejuni (strain RM1221).